The chain runs to 1106 residues: Protein kinase C (1106 aa).

The REM-1 1 domain maps to M1 to K67. The interval Q65–A138 is disordered. Positions P79–D93 are enriched in pro residues. The region spanning K149 to D226 is the REM-1 2 domain. The C2 domain maps to A232–F350. Positions M361–Q370 are enriched in basic and acidic residues. Residues M361 to P400 form a disordered region. Positions G386–P400 are enriched in gly residues. 2 consecutive Phorbol-ester/DAG-type zinc fingers follow at residues G460 to C508 and P528 to C578. 2 stretches are compositionally biased toward polar residues: residues K600–S609 and Y658–Q668. 2 disordered regions span residues K600–N625 and Y658–Y719. Positions A683–A693 are enriched in low complexity. Positions F781–F1040 constitute a Protein kinase domain. ATP-binding positions include L787–V795 and K810. D906 functions as the Proton acceptor in the catalytic mechanism. An AGC-kinase C-terminal domain is found at R1041–A1106. Residue T1082 is modified to Phosphothreonine. The residue at position 1100 (S1100) is a Phosphoserine. Position 1101 is a phosphotyrosine (Y1101).

The protein belongs to the protein kinase superfamily. AGC Ser/Thr protein kinase family. PKC subfamily. As to quaternary structure, interacts with hsp90.

It carries out the reaction L-seryl-[protein] + ATP = O-phospho-L-seryl-[protein] + ADP + H(+). The catalysed reaction is L-threonyl-[protein] + ATP = O-phospho-L-threonyl-[protein] + ADP + H(+). In terms of biological role, protein kinase C; part of cell wall integrity (CWI) signaling pathway composed of pkcA, the bck1-mkk2-mpka MAPK cascade and the downstream rlmA transcription regulator. The CWI signaling pathway regulates cell wall integrity and pyomelanin formation. CWI also controls oxidative stress response, gliotoxin production, iron adaptation and asexual development. Finally, CWI is constitutively required for A.fumigatus to cope with the temperature increase found in the mammalian lung environment, during infection. Modulates the expression of fumiquinazoline cluster during conidiogenesis. The sequence is that of Protein kinase C from Aspergillus fumigatus (strain ATCC MYA-4609 / CBS 101355 / FGSC A1100 / Af293) (Neosartorya fumigata).